A 120-amino-acid chain; its full sequence is UPF0102 protein Pfl01_4685 (120 aa).

Belongs to the UPF0102 family.

The chain is UPF0102 protein Pfl01_4685 from Pseudomonas fluorescens (strain Pf0-1).